A 90-amino-acid chain; its full sequence is DNA-directed RNA polymerase subunit Rpo5 (90 aa).

The protein belongs to the archaeal Rpo5/eukaryotic RPB5 RNA polymerase subunit family. As to quaternary structure, part of the RNA polymerase complex.

It is found in the cytoplasm. It carries out the reaction RNA(n) + a ribonucleoside 5'-triphosphate = RNA(n+1) + diphosphate. Its function is as follows. DNA-dependent RNA polymerase (RNAP) catalyzes the transcription of DNA into RNA using the four ribonucleoside triphosphates as substrates. The polypeptide is DNA-directed RNA polymerase subunit Rpo5 (Aeropyrum pernix (strain ATCC 700893 / DSM 11879 / JCM 9820 / NBRC 100138 / K1)).